The primary structure comprises 534 residues: Peptide chain release factor 3 (534 aa).

The tr-type G domain maps to 9-278 (ARRRTFAIIS…FFVEHAPPPQ (270 aa)). GTP-binding positions include 18–25 (SHPDAGKT), 86–90 (DTPGH), and 140–143 (NKLD).

Belongs to the TRAFAC class translation factor GTPase superfamily. Classic translation factor GTPase family. PrfC subfamily.

It localises to the cytoplasm. Increases the formation of ribosomal termination complexes and stimulates activities of RF-1 and RF-2. It binds guanine nucleotides and has strong preference for UGA stop codons. It may interact directly with the ribosome. The stimulation of RF-1 and RF-2 is significantly reduced by GTP and GDP, but not by GMP. The sequence is that of Peptide chain release factor 3 from Xanthomonas campestris pv. campestris (strain 8004).